Reading from the N-terminus, the 659-residue chain is DNA mismatch repair protein MutL (659 aa).

The protein belongs to the DNA mismatch repair MutL/HexB family.

In terms of biological role, this protein is involved in the repair of mismatches in DNA. It is required for dam-dependent methyl-directed DNA mismatch repair. May act as a 'molecular matchmaker', a protein that promotes the formation of a stable complex between two or more DNA-binding proteins in an ATP-dependent manner without itself being part of a final effector complex. The protein is DNA mismatch repair protein MutL of Ligilactobacillus salivarius (strain UCC118) (Lactobacillus salivarius).